Here is a 900-residue protein sequence, read N- to C-terminus: Nuclear factor NF-kappa-B p100 subunit (900 aa).

Phosphoserine is present on residues S23 and S161. An RHD domain is found at 38-343 (PYLVIVEQPK…EVQRKRRKAL (306 aa)). The short motif at 337–341 (RKRRK) is the Nuclear localization signal element. The interval 346 to 377 (FSQPFGGGSHMGGGSGGAAGGYGGAGGGGSLG) is GRR. Residues 404 to 435 (GAQMAATVPSRDSGEEAAEPSAPSRTPQCEPQ) are disordered. The residue at position 429 (T429) is a Phosphothreonine. 6 ANK repeats span residues 487–519 (NGDT…DLGV), 526–555 (LHQT…DPAL), 559–591 (HGDS…AVPQ), 599–628 (EGLY…EVEA), 633–663 (GGRT…NVNA), and 667–696 (AGNT…DIHA). Positions 698–734 (NEEPLCPLPSPPTSDSDSDSEGPEKDTRSSFRGHTPL) are disordered. Residues S713, S715, and S717 each carry the phosphoserine modification. An ANK 7 repeat occupies 729-758 (RGHTPLDLTCSTKVKTLLLNAAQNTMEPPL). Residues 764–851 (AGPGLSLGDT…EGVRLLRGPE (88 aa)) enclose the Death domain. S812 carries the phosphoserine modification. Residues 849–866 (GPETRDKLPSTAEVKEDS) are compositionally biased toward basic and acidic residues. The disordered stretch occupies residues 849–900 (GPETRDKLPSTAEVKEDSAYGSQSVEQEAEKLGPPPEPPGGLCHGHPQPQVH). K855 is covalently cross-linked (Glycyl lysine isopeptide (Lys-Gly) (interchain with G-Cter in ubiquitin)). Phosphoserine; by MAP3K14 is present on residues S866 and S870. A compositionally biased stretch (low complexity) spans 888–900 (GGLCHGHPQPQVH).

In terms of assembly, component of the NF-kappa-B RelB-p52 complex. Homodimer; component of the NF-kappa-B p52-p52 complex. Component of the NF-kappa-B p65-p52 complex. Component of the NF-kappa-B p52-c-Rel complex. NFKB2/p52 interacts with NFKBIE. Component of a complex consisting of the NF-kappa-B p50-p50 homodimer and BCL3. Directly interacts with MEN1. In terms of processing, while translation occurs, the particular unfolded structure after the GRR repeat promotes the generation of p52 making it an acceptable substrate for the proteasome. This process is known as cotranslational processing. The processed form is active and the unprocessed form acts as an inhibitor (I kappa B-like), being able to form cytosolic complexes with NF-kappa B, trapping it in the cytoplasm. Complete folding of the region downstream of the GRR repeat precludes processing. Subsequent to MAP3K14-dependent serine phosphorylation, p100 polyubiquitination occurs then triggering its proteasome-dependent processing. Post-translationally, constitutive processing is tightly suppressed by its C-terminal processing inhibitory domain, named PID, which contains the death domain. In terms of processing, ubiquitinated by TRIM55; leading to processing by VCP and subsequent ubiquitin-dependent protein degradation by the proteasome.

The protein localises to the nucleus. It is found in the cytoplasm. Functionally, NF-kappa-B is a pleiotropic transcription factor present in almost all cell types and is the endpoint of a series of signal transduction events that are initiated by a vast array of stimuli related to many biological processes such as inflammation, immunity, differentiation, cell growth, tumorigenesis and apoptosis. NF-kappa-B is a homo- or heterodimeric complex formed by the Rel-like domain-containing proteins RELA/p65, RELB, NFKB1/p105, NFKB1/p50, REL and NFKB2/p52. The dimers bind at kappa-B sites in the DNA of their target genes and the individual dimers have distinct preferences for different kappa-B sites that they can bind with distinguishable affinity and specificity. Different dimer combinations act as transcriptional activators or repressors, respectively. NF-kappa-B is controlled by various mechanisms of post-translational modification and subcellular compartmentalization as well as by interactions with other cofactors or corepressors. NF-kappa-B complexes are held in the cytoplasm in an inactive state complexed with members of the NF-kappa-B inhibitor (I-kappa-B) family. In a conventional activation pathway, I-kappa-B is phosphorylated by I-kappa-B kinases (IKKs) in response to different activators, subsequently degraded thus liberating the active NF-kappa-B complex which translocates to the nucleus. In a non-canonical activation pathway, the MAP3K14-activated CHUK/IKKA homodimer phosphorylates NFKB2/p100 associated with RelB, inducing its proteolytic processing to NFKB2/p52 and the formation of NF-kappa-B RelB-p52 complexes. The NF-kappa-B heterodimeric RelB-p52 complex is a transcriptional activator. The NF-kappa-B p52-p52 homodimer is a transcriptional repressor. NFKB2 appears to have dual functions such as cytoplasmic retention of attached NF-kappa-B proteins by p100 and generation of p52 by a cotranslational processing. The proteasome-mediated process ensures the production of both p52 and p100 and preserves their independent function. p52 binds to the kappa-B consensus sequence 5'-GGRNNYYCC-3', located in the enhancer region of genes involved in immune response and acute phase reactions. p52 and p100 are respectively the minor and major form; the processing of p100 being relatively poor. Isoform p49 is a subunit of the NF-kappa-B protein complex, which stimulates the HIV enhancer in synergy with p65. In concert with RELB, regulates the circadian clock by repressing the transcriptional activator activity of the CLOCK-BMAL1 heterodimer. The sequence is that of Nuclear factor NF-kappa-B p100 subunit (NFKB2) from Homo sapiens (Human).